Reading from the N-terminus, the 238-residue chain is Neuromodulin (238 aa).

The segment at 1 to 238 (MLCCMRRTKQ…EEPEADQEHA (238 aa)) is disordered. Residues C3 and C4 are each lipidated (S-palmitoyl cysteine). Positions 9–32 (KQVEKNDEDQKIEQDGIKPEDKAH) are enriched in basic and acidic residues. The region spanning 31–60 (AHKAATKIQASFRGHITRKKLKGEKKDDAQ) is the IQ domain. S41 carries the phosphoserine; by PHK and PKC modification. Residues 54–83 (EKKDDAQAAEAEANKKDEAPVADGVEKKGE) are compositionally biased toward basic and acidic residues. Low complexity predominate over residues 84–95 (GTTATEAAPATG). Residues 97-116 (KPDEPGKAGETPSEEKKGEG) are compositionally biased toward basic and acidic residues. Over residues 119 to 130 (ATEQAAPQAPAS) the composition is skewed to low complexity. The segment covering 139–154 (ETESATKASTDNSPSS) has biased composition (polar residues). 3 positions are modified to phosphoserine: S151, S153, and S154. Over residues 155-167 (KAEDAPAKEEPKQ) the composition is skewed to basic and acidic residues. The segment covering 168–199 (ADVPAAVTAAAATTPAAEDAAAKATAQPPTET) has biased composition (low complexity). Residue T181 is modified to Phosphothreonine. Residues S202 and S203 each carry the phosphoserine; by CK2 modification. Over residues 213–225 (DETKPKESARQDE) the composition is skewed to basic and acidic residues. Residues 226-238 (GKEEEPEADQEHA) are compositionally biased toward acidic residues.

Belongs to the neuromodulin family. As to quaternary structure, identified in a complex containing FGFR4, NCAM1, CDH2, PLCG1, FRS2, SRC, SHC1, GAP43 and CTTN. Interacts (via IQ domain) with calmodulin. Binds calmodulin with a greater affinity in the absence of Ca(2+) than in its presence. Phosphorylated. Phosphorylation of this protein by a protein kinase C is specifically correlated with certain forms of synaptic plasticity. In terms of processing, palmitoylated by ZDHHC3. Palmitoylation is regulated by ARF6 and is essential for plasma membrane association and axonal and dendritic filopodia induction. Deacylated by LYPLA2.

Its subcellular location is the cell membrane. It is found in the cell projection. It localises to the growth cone membrane. The protein resides in the synapse. The protein localises to the filopodium membrane. Its subcellular location is the perikaryon. It is found in the dendrite. It localises to the axon. The protein resides in the cytoplasm. Functionally, this protein is associated with nerve growth. It is a major component of the motile 'growth cones' that form the tips of elongating axons. Plays a role in axonal and dendritic filopodia induction. This chain is Neuromodulin (GAP43), found in Macaca fascicularis (Crab-eating macaque).